The primary structure comprises 245 residues: tRNA1(Val) (adenine(37)-N6)-methyltransferase (245 aa).

The protein belongs to the methyltransferase superfamily. tRNA (adenine-N(6)-)-methyltransferase family.

The protein resides in the cytoplasm. The enzyme catalyses adenosine(37) in tRNA1(Val) + S-adenosyl-L-methionine = N(6)-methyladenosine(37) in tRNA1(Val) + S-adenosyl-L-homocysteine + H(+). Specifically methylates the adenine in position 37 of tRNA(1)(Val) (anticodon cmo5UAC). This is tRNA1(Val) (adenine(37)-N6)-methyltransferase from Shigella boydii serotype 18 (strain CDC 3083-94 / BS512).